The primary structure comprises 654 residues: uncharacterized protein (654 aa).

The span at 1–13 shows a compositional bias: polar residues; the sequence is MSNLILTPSNNGT. Residues 1-23 form a disordered region; that stretch reads MSNLILTPSNNGTERPYRSRKTR. Residues 25-54 constitute a DNA-binding region (zn(2)-C6 fungal-type); the sequence is CDNCRLRKSRCVVESIGNPCLLCTQLKIPC. Residues 63-96 are disordered; sequence RNKQKKQQDSVSDDTPSEATTTTNDDRDPKYNAL.

Its subcellular location is the cytoplasm. The protein resides in the nucleus. This is an uncharacterized protein from Schizosaccharomyces pombe (strain 972 / ATCC 24843) (Fission yeast).